The chain runs to 465 residues: Sorting nexin-8 (465 aa).

Low complexity predominate over residues 1 to 19 (MTGRAMDPLPAAAVGAAAE). Residues 1–36 (MTGRAMDPLPAAAVGAAAEAEADEEADPPASDLPTP) form a disordered region. The PX domain occupies 73–181 (ARDTVQVELI…KLFLSFSGSD (109 aa)). Residues Arg109, Lys135, and Arg148 each contribute to the a 1,2-diacyl-sn-glycero-3-phospho-(1D-myo-inositol-3-phosphate) site. Thr452 carries the post-translational modification Phosphothreonine. A Phosphoserine modification is found at Ser456.

It belongs to the sorting nexin family.

The protein localises to the early endosome membrane. Its function is as follows. May be involved in several stages of intracellular trafficking. May play a role in intracellular protein transport from early endosomes to the trans-Golgi network. The chain is Sorting nexin-8 (SNX8) from Homo sapiens (Human).